Reading from the N-terminus, the 171-residue chain is Co-chaperone protein HscB (171 aa).

Residues 2–74 enclose the J domain; that stretch reads DYFTLFGLPA…LTRAEYLLSL (73 aa).

Belongs to the HscB family. In terms of assembly, interacts with HscA and stimulates its ATPase activity. Interacts with IscU.

Co-chaperone involved in the maturation of iron-sulfur cluster-containing proteins. Seems to help targeting proteins to be folded toward HscA. This chain is Co-chaperone protein HscB, found in Salmonella paratyphi A (strain AKU_12601).